Reading from the N-terminus, the 278-residue chain is Undecaprenyl-diphosphatase (278 aa).

The next 8 membrane-spanning stretches (helical) occupy residues 14–34 (GTTEFLPISSSAHLIVLPWLF), 40–60 (GLAFNVALHLGTLSAVLAYFW), 89–109 (WAVIIGSLPAGLAGFFLNDVI), 121–141 (TAIVFTSLLLIVLGFVLWLAE), 153–173 (LGLRDGLVVGLAQALALLPGV), 196–216 (FSFILGIPAIAGAGLLETLKL), 227–247 (VLFVTGVASAAITGFLAIAFL), and 257–277 (SIFIVYRIALGLVLLLVVSFA).

Belongs to the UppP family.

It localises to the cell membrane. The catalysed reaction is di-trans,octa-cis-undecaprenyl diphosphate + H2O = di-trans,octa-cis-undecaprenyl phosphate + phosphate + H(+). Its function is as follows. Catalyzes the dephosphorylation of undecaprenyl diphosphate (UPP). Confers resistance to bacitracin. This Thermomicrobium roseum (strain ATCC 27502 / DSM 5159 / P-2) protein is Undecaprenyl-diphosphatase.